We begin with the raw amino-acid sequence, 138 residues long: 6,7-dimethyl-8-ribityllumazine synthase (138 aa).

Residues Phe13, 45–47 (VFD), and 69–71 (AVI) contribute to the 5-amino-6-(D-ribitylamino)uracil site. 74-75 (AT) contacts (2S)-2-hydroxy-3-oxobutyl phosphate. His77 functions as the Proton donor in the catalytic mechanism. Leu102 contacts 5-amino-6-(D-ribitylamino)uracil. Position 117 (Arg117) interacts with (2S)-2-hydroxy-3-oxobutyl phosphate.

The protein belongs to the DMRL synthase family.

The enzyme catalyses (2S)-2-hydroxy-3-oxobutyl phosphate + 5-amino-6-(D-ribitylamino)uracil = 6,7-dimethyl-8-(1-D-ribityl)lumazine + phosphate + 2 H2O + H(+). It functions in the pathway cofactor biosynthesis; riboflavin biosynthesis; riboflavin from 2-hydroxy-3-oxobutyl phosphate and 5-amino-6-(D-ribitylamino)uracil: step 1/2. In terms of biological role, catalyzes the formation of 6,7-dimethyl-8-ribityllumazine by condensation of 5-amino-6-(D-ribitylamino)uracil with 3,4-dihydroxy-2-butanone 4-phosphate. This is the penultimate step in the biosynthesis of riboflavin. This is 6,7-dimethyl-8-ribityllumazine synthase from Methanobrevibacter smithii (strain ATCC 35061 / DSM 861 / OCM 144 / PS).